We begin with the raw amino-acid sequence, 269 residues long: Phosphonoacetaldehyde hydrolase (269 aa).

Residue aspartate 10 is the Nucleophile of the active site. Mg(2+)-binding residues include aspartate 10 and alanine 12. The Schiff-base intermediate with substrate role is filled by lysine 52. A Mg(2+)-binding site is contributed by aspartate 186.

Belongs to the HAD-like hydrolase superfamily. PhnX family. Homodimer. Mg(2+) is required as a cofactor.

It catalyses the reaction phosphonoacetaldehyde + H2O = acetaldehyde + phosphate + H(+). Its function is as follows. Involved in phosphonate degradation. The polypeptide is Phosphonoacetaldehyde hydrolase (Klebsiella pneumoniae subsp. pneumoniae (strain ATCC 700721 / MGH 78578)).